A 322-amino-acid chain; its full sequence is Probable transcription factor KAN3 (322 aa).

Positions 1 to 35 are disordered; sequence MELFPSQPDLYLKISRRREEEQEKESQELQEQEVE. Over residues 17–35 the composition is skewed to basic and acidic residues; that stretch reads RREEEQEKESQELQEQEVE. An HTH myb-type domain is found at 161–221; sequence GVRAPRMRWT…HLQMYRTIKS (61 aa). Residues 192 to 217 constitute a DNA-binding region (H-T-H motif); sequence PKSVLELMDVQDLTLAHVKSHLQMYR. Disordered regions lie at residues 222–244 and 267–322; these read TEKP…NSER and KASS…NLSP. Composition is skewed to polar residues over residues 224-241 and 299-322; these read KPTT…SQVN and LTGT…NLSP.

Expressed in developing phloem.

The protein resides in the nucleus. Probable transcription factor that regulates lateral organ polarity. Plays a role in lateral root formation and development. The sequence is that of Probable transcription factor KAN3 (KAN3) from Arabidopsis thaliana (Mouse-ear cress).